The sequence spans 725 residues: Polyribonucleotide nucleotidyltransferase (725 aa).

Mg(2+) is bound by residues D487 and D493. Positions 554–613 constitute a KH domain; sequence PRIETMQIPTDKIREVIGTGGKVIREIVEKTGAKIDIQDTGVVKIASSDGKAIKAAYNWI. The region spanning 623-691 is the S1 motif domain; sequence GMIYDGTVVK…ERGKIRLSMK (69 aa). The interval 699-725 is disordered; it reads EDLTEKLKAEREADRNRERQARQSAGE. Basic and acidic residues predominate over residues 701 to 719; sequence LTEKLKAEREADRNRERQA.

This sequence belongs to the polyribonucleotide nucleotidyltransferase family. The cofactor is Mg(2+).

The protein localises to the cytoplasm. The catalysed reaction is RNA(n+1) + phosphate = RNA(n) + a ribonucleoside 5'-diphosphate. Its function is as follows. Involved in mRNA degradation. Catalyzes the phosphorolysis of single-stranded polyribonucleotides processively in the 3'- to 5'-direction. This chain is Polyribonucleotide nucleotidyltransferase, found in Methylobacterium sp. (strain 4-46).